A 623-amino-acid polypeptide reads, in one-letter code: Probable methyltransferase PMT8 (623 aa).

Over 1–13 the chain is Cytoplasmic; sequence MMRGRSDGGLKKR. A helical; Signal-anchor for type II membrane protein transmembrane segment spans residues 14 to 34; the sequence is LIASVCVVALFVCFLFMYYGS. The Lumenal portion of the chain corresponds to 35-623; sequence SSQGASALEY…LTSESLRDSE (589 aa). N-linked (GlcNAc...) asparagine glycans are attached at residues Asn-204, Asn-350, and Asn-588.

Belongs to the methyltransferase superfamily.

Its subcellular location is the golgi apparatus membrane. The protein is Probable methyltransferase PMT8 of Arabidopsis thaliana (Mouse-ear cress).